The sequence spans 118 residues: Large ribosomal subunit protein uL18 (118 aa).

Residues Met-1–Arg-10 are compositionally biased toward basic and acidic residues. The segment at Met-1–Val-20 is disordered. The span at Ser-11–Val-20 shows a compositional bias: basic residues.

This sequence belongs to the universal ribosomal protein uL18 family. As to quaternary structure, part of the 50S ribosomal subunit; part of the 5S rRNA/L5/L18/L25 subcomplex. Contacts the 5S and 23S rRNAs.

Its function is as follows. This is one of the proteins that bind and probably mediate the attachment of the 5S RNA into the large ribosomal subunit, where it forms part of the central protuberance. In Acaryochloris marina (strain MBIC 11017), this protein is Large ribosomal subunit protein uL18.